The chain runs to 59 residues: MAVPRNRHSNARKNIRRSHHAKKACSAAVCSNCKQAFIPHTVCASCGFYKGKAVITVEK.

Residues 1 to 20 (MAVPRNRHSNARKNIRRSHH) form a disordered region.

Belongs to the bacterial ribosomal protein bL32 family.

In Chlamydia trachomatis serovar A (strain ATCC VR-571B / DSM 19440 / HAR-13), this protein is Large ribosomal subunit protein bL32.